The chain runs to 656 residues: UV-damage endonuclease (656 aa).

Disordered regions lie at residues 1–82 (MPSR…GKEQ), 119–146 (PSVVSRFPTAPYHHKSTNAEEREAKEPV), 175–194 (IIEPEDAQDAAERGAARPPA), 241–264 (PLQFEDEPEHHLKNKPDKSKEPQD), 492–515 (EPCDGAVTPRDRRKHRPRVMTLPP), 550–620 (DMVP…GPYN), and 636–656 (KREVKKGKVPEEVEDEGEFDG). A compositionally biased stretch (low complexity) spans 13–32 (TPQSESSTFSSTLDSSAPSP). Composition is skewed to basic and acidic residues over residues 48–82 (SEKDRDHEKRSGEELAGRMMGKDANGHCLREGKEQ) and 135–146 (TNAEEREAKEPV). Residues 550–561 (DMVPYDRDDENR) show a composition bias toward basic and acidic residues. Positions 568–579 (APKKKKGGKRKR) are enriched in basic residues. Positions 583–595 (EEAAEPEEVDTAA) are enriched in acidic residues. A compositionally biased stretch (basic and acidic residues) spans 596-614 (DDVKDAPEGPKEVPEEERA). The segment covering 647 to 656 (EVEDEGEFDG) has biased composition (acidic residues).

The protein belongs to the uve1/UvsE family. The cofactor is Mg(2+).

Its function is as follows. Endonuclease for the repair of UV-irradiated DNA. Involved in the excision of cyclobutane pyrimidine dimers (CPD) and 6-4 pyrimidine pyrimidones (6-4PP) which forms the UV damage repair (UVDR) pathway. This chain is UV-damage endonuclease (mus-18), found in Neurospora crassa (strain ATCC 24698 / 74-OR23-1A / CBS 708.71 / DSM 1257 / FGSC 987).